The chain runs to 309 residues: tRNA pseudouridine synthase B (309 aa).

Aspartate 45 (nucleophile) is an active-site residue.

Belongs to the pseudouridine synthase TruB family. Type 1 subfamily.

The enzyme catalyses uridine(55) in tRNA = pseudouridine(55) in tRNA. Its function is as follows. Responsible for synthesis of pseudouridine from uracil-55 in the psi GC loop of transfer RNAs. This is tRNA pseudouridine synthase B from Oleidesulfovibrio alaskensis (strain ATCC BAA-1058 / DSM 17464 / G20) (Desulfovibrio alaskensis).